The primary structure comprises 867 residues: Bifunctional isopimaradiene synthase, chloroplastic (867 aa).

The transit peptide at 1–68 (MALLSSSLSS…VGEGTTSLPY (68 aa)) directs the protein to the chloroplast. Lysine 267 is a substrate binding site. Residues aspartate 400 and aspartate 402 each coordinate Mg(2+). The DXDD motif motif lies at 400-403 (DIDD). Lysine 487 contributes to the substrate binding site. Positions 619, 623, 763, 767, and 771 each coordinate Mg(2+). Positions 619 to 623 (DDLYD) match the DDXXD motif motif.

Belongs to the terpene synthase family. Tpsd subfamily. Mg(2+) serves as cofactor.

Its subcellular location is the plastid. The protein resides in the chloroplast. The catalysed reaction is (2E,6E,10E)-geranylgeranyl diphosphate = (+)-copalyl diphosphate. It catalyses the reaction (+)-copalyl diphosphate = isopimara-7,15-diene + diphosphate. The protein operates within terpene metabolism; oleoresin biosynthesis. Its function is as follows. Involved in defensive oleoresin formation in conifers in response to insect attack or other injury. Involved in diterpene (C20) olefins biosynthesis. Bifunctional enzyme that catalyzes two sequential cyclizations of geranylgeranyl diphosphate (GGPP) to isopimara-7,15-diene. The polypeptide is Bifunctional isopimaradiene synthase, chloroplastic (TPS-ISO) (Picea abies (Norway spruce)).